The sequence spans 687 residues: DNA ligase (687 aa).

NAD(+) is bound by residues Asp33–Asp37, Ser83–Leu84, and Glu113. Residue Lys115 is the N6-AMP-lysine intermediate of the active site. NAD(+) contacts are provided by Arg136, Glu176, Lys292, and Lys316. Residues Cys410, Cys413, Cys429, and Cys435 each contribute to the Zn(2+) site. A BRCT domain is found at Ser599–Thr687.

The protein belongs to the NAD-dependent DNA ligase family. LigA subfamily. The cofactor is Mg(2+). Mn(2+) serves as cofactor.

The catalysed reaction is NAD(+) + (deoxyribonucleotide)n-3'-hydroxyl + 5'-phospho-(deoxyribonucleotide)m = (deoxyribonucleotide)n+m + AMP + beta-nicotinamide D-nucleotide.. Its function is as follows. DNA ligase that catalyzes the formation of phosphodiester linkages between 5'-phosphoryl and 3'-hydroxyl groups in double-stranded DNA using NAD as a coenzyme and as the energy source for the reaction. It is essential for DNA replication and repair of damaged DNA. This chain is DNA ligase, found in Mycobacterium marinum (strain ATCC BAA-535 / M).